Here is a 75-residue protein sequence, read N- to C-terminus: Exodeoxyribonuclease 7 small subunit (75 aa).

The protein belongs to the XseB family. In terms of assembly, heterooligomer composed of large and small subunits.

It is found in the cytoplasm. The enzyme catalyses Exonucleolytic cleavage in either 5'- to 3'- or 3'- to 5'-direction to yield nucleoside 5'-phosphates.. In terms of biological role, bidirectionally degrades single-stranded DNA into large acid-insoluble oligonucleotides, which are then degraded further into small acid-soluble oligonucleotides. In Anaplasma phagocytophilum (strain HZ), this protein is Exodeoxyribonuclease 7 small subunit.